The chain runs to 449 residues: Exodeoxyribonuclease 7 large subunit (449 aa).

Belongs to the XseA family. As to quaternary structure, heterooligomer composed of large and small subunits.

The protein resides in the cytoplasm. It catalyses the reaction Exonucleolytic cleavage in either 5'- to 3'- or 3'- to 5'-direction to yield nucleoside 5'-phosphates.. Bidirectionally degrades single-stranded DNA into large acid-insoluble oligonucleotides, which are then degraded further into small acid-soluble oligonucleotides. This chain is Exodeoxyribonuclease 7 large subunit, found in Salmonella dublin (strain CT_02021853).